The primary structure comprises 541 residues: Exopolysaccharide phosphotransferase SCO6021 (541 aa).

It belongs to the stealth family.

This is Exopolysaccharide phosphotransferase SCO6021 from Streptomyces coelicolor (strain ATCC BAA-471 / A3(2) / M145).